The following is an 84-amino-acid chain: MKVKILQWHAVASWTWDAQDETCGICRMAFDGCCPDCKLPGDDCPLIWGACNHAFHLHCILKWVNSQTSQAHCPMCRREWQFKE.

Residues 34–77 form an RING-type; atypical zinc finger; sequence CPDCKLPGDDCPLIWGACNHAFHLHCILKWVNSQTSQAHCPMCR.

It belongs to the RING-box family. As to quaternary structure, part of the APC/C complex composed of at least 10 subunits. Interacts with APC2.

It localises to the cytoplasm. Its subcellular location is the nucleus. Its pathway is protein modification; protein ubiquitination. Functionally, component of the anaphase promoting complex/cyclosome (APC/C), a cell cycle-regulated E3 ubiquitin-protein ligase complex that controls progression through mitosis and the G1 phase of the cell cycle. The APC/C complex controls several key steps in the cell cycle by mediating ubiquitination and subsequent degradation of target proteins such as cyclins. The APC/C complex is required for the female gametophyte development and is involved in several aspect of development by controlling cell division and cell elongation. Involved in the control of endoreduplication. May recruit the E2 ubiquitin-conjugating enzymes to the complex. The sequence is that of Anaphase-promoting complex subunit 11 from Arabidopsis thaliana (Mouse-ear cress).